A 348-amino-acid polypeptide reads, in one-letter code: MDPWISTQPSLSLDLRVGLPATAAVAMVKPKVLVEEDFFHQQPLKKDPEVAALEAELKRMGAENRQLSEMLAAVAAKYEALQSQFSDMVTASANNGGGGGNNQSSTSEGGSVSPSRKRKSESLDDSPPPPPPPHPHAAPHHMHVMPGAAAAGYADQTECTSGEPCKRIREECKPKISKLYVHADPSDLSLVVKDGYQWRKYGQKVTKDNPCPRAYFRCSFAPACPVKKKVQRSAEDNTILVATYEGEHNHGQPPPPLQSAAQNSDGSGKSAGKPPHAPAAAPPAPVVPHRQHEPVVVNGEQQAAAASEMIRRNLAEQMAMTLTRDPSFKAALVTALSGRILELSPTKD.

Residues 50-84 adopt a coiled-coil conformation; the sequence is VAALEAELKRMGAENRQLSEMLAAVAAKYEALQSQ. 2 disordered regions span residues 91–141 and 246–287; these read ASAN…APHH and GEHN…APVV. Positions 102-114 are enriched in low complexity; the sequence is NQSSTSEGGSVSP. The Nuclear localization signal motif lies at 116–122; it reads RKRKSES. Residues 126–136 are compositionally biased toward pro residues; sequence SPPPPPPPHPH. Positions 187–253 form a DNA-binding region, WRKY; that stretch reads DLSLVVKDGY…YEGEHNHGQP (67 aa). Residues 267 to 348 are transcription repression of gibberellic acid (GA)-induced promoters; that stretch reads SGKSAGKPPH…RILELSPTKD (82 aa). Residues 275–286 are compositionally biased toward pro residues; that stretch reads PHAPAAAPPAPV.

This sequence belongs to the WRKY group II-a family. As to quaternary structure, interacts with WRKY51; this interaction promotes W box binding of the complex WRKY51/WRKY71 in a zinc ion-dependent manner. As to expression, highly expressed in aleurone cells. In seeds, predominantly present in the plumule, radicle and scutellum of the embryo. Expressed in roots, stems, young leaves and spikelets.

It is found in the nucleus. Its function is as follows. Transcription repressor. Interacts specifically with the W box (5'-(T)TGAC[CT]-3'), a frequently occurring elicitor-responsive cis-acting element. Represses specifically gibberellic acid (GA)-induced promoters in aleurone cells, probably by interfering with GAM1. Regulates, probably indirectly, the activation of defense-related genes such as GF14E during defense response. Modulates plant innate immunity against X.oryzae pv. oryzae (Xoo). Confers resistance to the virulent bacterial pathogen X.oryzae pv. oryzae (Xoo) 13751, probably via the regulation of NPR1 and PR1b defense signaling pathways. The polypeptide is WRKY transcription factor WRKY71 (Oryza sativa subsp. indica (Rice)).